The chain runs to 596 residues: Arginine--tRNA ligase (596 aa).

Positions 128 to 138 (ANPTSSLHVGH) match the 'HIGH' region motif.

Belongs to the class-I aminoacyl-tRNA synthetase family. In terms of assembly, monomer.

The protein localises to the cytoplasm. It carries out the reaction tRNA(Arg) + L-arginine + ATP = L-arginyl-tRNA(Arg) + AMP + diphosphate. In Acinetobacter baumannii (strain SDF), this protein is Arginine--tRNA ligase.